The sequence spans 223 residues: 7-cyano-7-deazaguanine synthase (223 aa).

15-25 contacts ATP; the sequence is FSGGQDSTTCL. Zn(2+) contacts are provided by Cys-191, Cys-200, Cys-203, and Cys-206.

The protein belongs to the QueC family. As to quaternary structure, homodimer. It depends on Zn(2+) as a cofactor.

The catalysed reaction is 7-carboxy-7-deazaguanine + NH4(+) + ATP = 7-cyano-7-deazaguanine + ADP + phosphate + H2O + H(+). Its pathway is purine metabolism; 7-cyano-7-deazaguanine biosynthesis. In terms of biological role, catalyzes the ATP-dependent conversion of 7-carboxy-7-deazaguanine (CDG) to 7-cyano-7-deazaguanine (preQ(0)). This chain is 7-cyano-7-deazaguanine synthase, found in Staphylococcus epidermidis (strain ATCC 35984 / DSM 28319 / BCRC 17069 / CCUG 31568 / BM 3577 / RP62A).